The sequence spans 173 residues: Succinate dehydrogenase assembly factor 3, mitochondrial (173 aa).

Residues 1 to 59 (MFRPSTSLALRSTLRQLASASNQPIPPGSEINAVKRTVATILPPIRLYRRIIRAHRRLD) constitute a mitochondrion transit peptide. Residues 149–173 (FPPEKQRELAEKAAADAGLSVKKDE) are disordered. Residues 152–162 (EKQRELAEKAA) are compositionally biased toward basic and acidic residues.

This sequence belongs to the complex I LYR family. SDHAF3 subfamily. In terms of assembly, interacts with the iron-sulfur protein subunit within the SDH catalytic dimer.

It is found in the mitochondrion matrix. Its function is as follows. Plays an essential role in the assembly of succinate dehydrogenase (SDH), an enzyme complex (also referred to as respiratory complex II) that is a component of both the tricarboxylic acid (TCA) cycle and the mitochondrial electron transport chain, and which couples the oxidation of succinate to fumarate with the reduction of ubiquinone (coenzyme Q) to ubiquinol. Promotes maturation of the iron-sulfur protein subunit of the SDH catalytic dimer, protecting it from the deleterious effects of oxidants. May act together with SDHAF1. In Mycosarcoma maydis (Corn smut fungus), this protein is Succinate dehydrogenase assembly factor 3, mitochondrial.